The following is a 384-amino-acid chain: Chorismate synthase (384 aa).

The NADP(+) site is built by Arg-40 and Arg-46. FMN is bound by residues 127-129 (RTS), 247-248 (QA), Ala-292, 307-311 (KPIPT), and Arg-333.

Belongs to the chorismate synthase family. As to quaternary structure, homotetramer. FMNH2 serves as cofactor.

The catalysed reaction is 5-O-(1-carboxyvinyl)-3-phosphoshikimate = chorismate + phosphate. The protein operates within metabolic intermediate biosynthesis; chorismate biosynthesis; chorismate from D-erythrose 4-phosphate and phosphoenolpyruvate: step 7/7. Catalyzes the anti-1,4-elimination of the C-3 phosphate and the C-6 proR hydrogen from 5-enolpyruvylshikimate-3-phosphate (EPSP) to yield chorismate, which is the branch point compound that serves as the starting substrate for the three terminal pathways of aromatic amino acid biosynthesis. This reaction introduces a second double bond into the aromatic ring system. This Alkaliphilus oremlandii (strain OhILAs) (Clostridium oremlandii (strain OhILAs)) protein is Chorismate synthase.